Here is a 338-residue protein sequence, read N- to C-terminus: Ketol-acid reductoisomerase (NADP(+)) (338 aa).

The KARI N-terminal Rossmann domain maps to 1–181; the sequence is MKVYYDKDAD…GGTRGGVIET (181 aa). NADP(+) is bound by residues 24 to 27, arginine 47, and serine 52; that span reads YGSQ. The active site involves histidine 107. Glycine 133 is an NADP(+) binding site. One can recognise a KARI C-terminal knotted domain in the interval 182–327; the sequence is TFKEETETDL…AKLRDMMPWI (146 aa). Aspartate 190, glutamate 194, glutamate 226, and glutamate 230 together coordinate Mg(2+). Serine 251 is a substrate binding site.

The protein belongs to the ketol-acid reductoisomerase family. Requires Mg(2+) as cofactor.

The enzyme catalyses (2R)-2,3-dihydroxy-3-methylbutanoate + NADP(+) = (2S)-2-acetolactate + NADPH + H(+). It catalyses the reaction (2R,3R)-2,3-dihydroxy-3-methylpentanoate + NADP(+) = (S)-2-ethyl-2-hydroxy-3-oxobutanoate + NADPH + H(+). It participates in amino-acid biosynthesis; L-isoleucine biosynthesis; L-isoleucine from 2-oxobutanoate: step 2/4. It functions in the pathway amino-acid biosynthesis; L-valine biosynthesis; L-valine from pyruvate: step 2/4. Functionally, involved in the biosynthesis of branched-chain amino acids (BCAA). Catalyzes an alkyl-migration followed by a ketol-acid reduction of (S)-2-acetolactate (S2AL) to yield (R)-2,3-dihydroxy-isovalerate. In the isomerase reaction, S2AL is rearranged via a Mg-dependent methyl migration to produce 3-hydroxy-3-methyl-2-ketobutyrate (HMKB). In the reductase reaction, this 2-ketoacid undergoes a metal-dependent reduction by NADPH to yield (R)-2,3-dihydroxy-isovalerate. The protein is Ketol-acid reductoisomerase (NADP(+)) of Nitrosomonas europaea (strain ATCC 19718 / CIP 103999 / KCTC 2705 / NBRC 14298).